Consider the following 598-residue polypeptide: Major royal jelly protein 5 (598 aa).

Residues 1–17 form the signal peptide; sequence MTTWLLLVVCLGIACQG. 4 N-linked (GlcNAc...) asparagine glycosylation sites follow: asparagine 148, asparagine 164, asparagine 181, and asparagine 324.

This sequence belongs to the major royal jelly protein family. Found in and secreted from the hypopharyngeal glands of the worker honey bee (at protein level); expression peaks at 8 days post eclosion. Expressed in the brains of adult worker bees peaking at 12 days post eclosion (at protein level). Expressed in the spermatheca of adult queen bees (at protein level); Expression levels are higher in mated queens than in virgin queens. Expressed in the heads of worker bees after eclosion, expression dropping with age and detectable up to 26 days of age.

The protein resides in the secreted. In terms of biological role, component of royal jelly, a substance produced in the hypopharyngeal gland containing proteins, free amino acids, fatty acids, sugars and other nutrients, which is fed to developing larvae by worker nurse bees. Major royal jelly proteins (MRJPs) are high in essential amino acids and probably have a nutritional function in larval food. All larvae are fed some royal jelly (also known as worker jelly) early in their development but it forms the principal source of nutrition for larvae destined to become queen bees. Produced in the spermatheca of adult queen bees, along with other major royal jelly proteins, where it may act as a nutrient supply for sperm stored by mated queens, or be involved in energy metabolism. The polypeptide is Major royal jelly protein 5 (Apis mellifera (Honeybee)).